The primary structure comprises 203 residues: Putative 3-methyladenine DNA glycosylase (203 aa).

The protein belongs to the DNA glycosylase MPG family.

The sequence is that of Putative 3-methyladenine DNA glycosylase from Clostridium beijerinckii (strain ATCC 51743 / NCIMB 8052) (Clostridium acetobutylicum).